Consider the following 471-residue polypeptide: Trehalose-binding lipoprotein LpqY (471 aa).

Residues 1 to 28 (MDGRQVVRARRWCATAAVALMTASTVAA) form the signal peptide. Cys29 is lipidated: N-palmitoyl cysteine. Cys29 is lipidated: S-diacylglycerol cysteine. Residues Asn45, Glu46, Gln79, Asp100, Asn154, Tyr198, Trp279, Tyr281, Gly354, and Arg424 each coordinate alpha,alpha-trehalose. Cysteines 57 and 375 form a disulfide.

Belongs to the bacterial solute-binding protein 1 family. As to quaternary structure, monomer. The complex is composed of two ATP-binding proteins (SugC), two transmembrane proteins (SugA and SugB) and a solute-binding protein (LpqY).

The protein resides in the cell inner membrane. Part of the ABC transporter complex LpqY-SugA-SugB-SugC, which is highly specific for uptake of trehalose. Involved in the recycling of extracellular trehalose released from trehalose-containing molecules synthesized by M.thermoresistibile. Trehalose uptake is essential for virulence. Binds deuterated trehalose with similar high affinity to trehalose, trehalose analogs including galactotrehalose, 4-azido-4-deoxy-trehalose, 6-azido-6-deoxy-trehalose, 3-azido-3-deoxy-trehalose and mannotrehalose in the order of decreasing affinity, respectively, and 2-azido-2-deoxy-trehalose and kojibiose (alpha1,2-glycosidic bond) with very low affinity. Does not recognize single glucose, 6-amino-6-deoxy-trehalose, trehalose-6-phosphate, nigerose (alpha1,3-glycosidic bond), maltose (alpha1,4-glycosidic bond), isomaltose (alpha1,6-glycosidic bond) or glycerophosphocholine. Decreased recognition of alpha,beta-trehalose and almost no recognition of beta,beta-trehalose. Substrate specificity indicates a strict requirement for an alpha1,1-linked disaccharide. This is Trehalose-binding lipoprotein LpqY from Mycolicibacterium thermoresistibile (strain ATCC 19527 / DSM 44167 / CIP 105390 / JCM 6362 / NCTC 10409 / 316) (Mycobacterium thermoresistibile).